A 72-amino-acid polypeptide reads, in one-letter code: Crustacean hyperglycemic hormone A (72 aa).

A Pyrrolidone carboxylic acid modification is found at Q1. At F3 the chain carries D-phenylalanine; in form CHHA-II. 3 disulfides stabilise this stretch: C7–C43, C23–C39, and C26–C52. V72 carries the post-translational modification Valine amide.

Post-translationally, stereoinversion of L-Phe (in CHHA-I) to D-Phe (in CHHA-II).

Its subcellular location is the secreted. Hormone found in the sinus gland of isopods and decapods which controls the blood sugar level. Has a secretagogue action over the amylase released from the midgut gland. May act as a stress hormone and may be involved in the control of molting and reproduction. The protein is Crustacean hyperglycemic hormone A of Cherax destructor (Common yabby crayfish).